The sequence spans 199 residues: MAVAGPEIERLIQLLARLPGLGPRSARRAALHLIKKREALMVPLASALQVAIDRIQVCKTCGNIDTQSPCTVCTDPRRDPAMIVVVADVADLWALERAKASNGRYHVLGGTLSPLDGVGPQDLTIDALVQRAHAPEVSEIILALNATVDGQTTAHYITDLLQEANVKVTRLAHGVPVGGELDYLDEGTLSAAMRQRTLF.

The C4-type zinc-finger motif lies at Cys-58 to Cys-73. One can recognise a Toprim domain in the interval Ala-81–Pro-176.

It belongs to the RecR family.

Its function is as follows. May play a role in DNA repair. It seems to be involved in an RecBC-independent recombinational process of DNA repair. It may act with RecF and RecO. The protein is Recombination protein RecR of Bradyrhizobium sp. (strain ORS 278).